Reading from the N-terminus, the 217-residue chain is Adenylate kinase (217 aa).

Position 10–15 (10–15 (GAGKGT)) interacts with ATP. Residues 30 to 59 (STGDMLRAAVKAGTPLGLEAKKVMDSGGLV) form an NMP region. AMP contacts are provided by residues Thr-31, Arg-36, 57-59 (GLV), 85-88 (GFPR), and Gln-92. Positions 122-159 (GRRVHVASGRTYHVKFNPPKVAGVDDVTGEPLIQRDDD) are LID. ATP contacts are provided by residues Arg-123 and 132-133 (TY). AMP is bound by residues Arg-156 and Arg-167. Residue Gly-203 coordinates ATP.

It belongs to the adenylate kinase family. Monomer.

Its subcellular location is the cytoplasm. It catalyses the reaction AMP + ATP = 2 ADP. It participates in purine metabolism; AMP biosynthesis via salvage pathway; AMP from ADP: step 1/1. In terms of biological role, catalyzes the reversible transfer of the terminal phosphate group between ATP and AMP. Plays an important role in cellular energy homeostasis and in adenine nucleotide metabolism. The polypeptide is Adenylate kinase (Methylibium petroleiphilum (strain ATCC BAA-1232 / LMG 22953 / PM1)).